The chain runs to 473 residues: Glutamate--tRNA ligase (473 aa).

A 'HIGH' region motif is present at residues 11 to 21 (PSPTGFLHIGG). Residues 240–244 (KLSKR) carry the 'KMSKS' region motif. Lysine 243 is an ATP binding site.

The protein belongs to the class-I aminoacyl-tRNA synthetase family. Glutamate--tRNA ligase type 1 subfamily. As to quaternary structure, monomer.

Its subcellular location is the cytoplasm. It carries out the reaction tRNA(Glu) + L-glutamate + ATP = L-glutamyl-tRNA(Glu) + AMP + diphosphate. Catalyzes the attachment of glutamate to tRNA(Glu) in a two-step reaction: glutamate is first activated by ATP to form Glu-AMP and then transferred to the acceptor end of tRNA(Glu). The sequence is that of Glutamate--tRNA ligase from Rhodopseudomonas palustris (strain BisB5).